A 360-amino-acid polypeptide reads, in one-letter code: Phospho-N-acetylmuramoyl-pentapeptide-transferase (360 aa).

The next 10 helical transmembrane spans lie at S3–I23, M52–V72, G81–I101, A115–A135, I153–G173, L187–F207, I230–A250, I254–V274, I282–F302, and F333–L353.

This sequence belongs to the glycosyltransferase 4 family. MraY subfamily. The cofactor is Mg(2+).

The protein localises to the cell membrane. The catalysed reaction is UDP-N-acetyl-alpha-D-muramoyl-L-alanyl-gamma-D-glutamyl-meso-2,6-diaminopimeloyl-D-alanyl-D-alanine + di-trans,octa-cis-undecaprenyl phosphate = di-trans,octa-cis-undecaprenyl diphospho-N-acetyl-alpha-D-muramoyl-L-alanyl-D-glutamyl-meso-2,6-diaminopimeloyl-D-alanyl-D-alanine + UMP. The protein operates within cell wall biogenesis; peptidoglycan biosynthesis. Catalyzes the initial step of the lipid cycle reactions in the biosynthesis of the cell wall peptidoglycan: transfers peptidoglycan precursor phospho-MurNAc-pentapeptide from UDP-MurNAc-pentapeptide onto the lipid carrier undecaprenyl phosphate, yielding undecaprenyl-pyrophosphoryl-MurNAc-pentapeptide, known as lipid I. The chain is Phospho-N-acetylmuramoyl-pentapeptide-transferase from Saccharopolyspora erythraea (strain ATCC 11635 / DSM 40517 / JCM 4748 / NBRC 13426 / NCIMB 8594 / NRRL 2338).